The chain runs to 778 residues: Pentatricopeptide repeat-containing protein At3g09650, chloroplastic (778 aa).

A chloroplast-targeting transit peptide spans 1-65 (MNILRPPTSS…RSASGTANSS (65 aa)). PPR repeat units lie at residues 235 to 269 (DTAAFNAVLNACANLGDTDKYWKLFEEMSEWDCEP), 270 to 304 (DVLTYNVMIKLCARVGRKELIVFVLERIIDKGIKV), and 305 to 339 (CMTTMHSLVAAYVGFGDLRTAERIVQAMREKRRDL). Residues 351–381 (LKEKEEEEAEDDEDAFEDDEDSGYSARDEVS) are disordered. Positions 355–372 (EEEEAEDDEDAFEDDEDS) are enriched in acidic residues. PPR repeat units follow at residues 413-443 (DSRIYTTLMKGYMKNGRVADTARMLEAMRRQ), 451-485 (DEVTYTTVVSAFVNAGLMDRARQVLAEMARMGVPA), 486-521 (NRITYNVLLKGYCKQLQIDRAEDLLREMTEDAGIEP), 522-556 (DVVSYNIIIDGCILIDDSAGALAFFNEMRTRGIAP), 557-587 (TKISYTTLMKAFAMSGQPKLANRVFDEMMND), 593-627 (DLIAWNMLVEGYCRLGLIEDAQRVVSRMKENGFYP), and 628-658 (NVATYGSLANGVSQARKPGDALLLWKEIKER).

Belongs to the PPR family. P subfamily.

It is found in the plastid. Its subcellular location is the chloroplast stroma. Involved in the processing of polycistronic chloroplast psbB-psbT-psbH-petB-petD transcript. Could bind RNA. This is Pentatricopeptide repeat-containing protein At3g09650, chloroplastic (HCF152) from Arabidopsis thaliana (Mouse-ear cress).